Reading from the N-terminus, the 166-residue chain is Large ribosomal subunit protein bL19 (166 aa).

This sequence belongs to the bacterial ribosomal protein bL19 family. Part of the 50S ribosomal subunit. Forms a cluster with proteins L3 and L14.

Functionally, this protein is located at the 30S-50S ribosomal subunit interface and may play a role in the structure and function of the aminoacyl-tRNA binding site. Binds the 23S rRNA. The chain is Large ribosomal subunit protein bL19 (rplS) from Deinococcus radiodurans (strain ATCC 13939 / DSM 20539 / JCM 16871 / CCUG 27074 / LMG 4051 / NBRC 15346 / NCIMB 9279 / VKM B-1422 / R1).